The sequence spans 830 residues: V-type proton ATPase 116 kDa subunit a 3 (830 aa).

At 1 to 385 (MGSMFRSEEV…DAYGVGRYQE (385 aa)) the chain is on the cytoplasmic side. Positions 139–158 (QLAAAHTDGASERTPLLQAP) are disordered. The chain crosses the membrane as a helical span at residues 386-404 (VNPAPYTIITFPFLFAVMF). At 405–406 (GD) the chain is on the vacuolar side. Residues 407 to 423 (VGHGLLMFLFALAMVLA) form a helical membrane-spanning segment. The Cytoplasmic segment spans residues 424-438 (ENRPAVKAAQNEIWQ). The chain crosses the membrane as a helical span at residues 439-468 (TFFRGRYLLLLMGLFSIYTGFIYNECFSRA). Over 469–532 (TSIFPSGWSV…AANHLSFLNS (64 aa)) the chain is Vacuolar. A helical transmembrane segment spans residues 533 to 552 (FKMKMSVILGVVHMAFGVVL). At 553–570 (GVFNHVHFGQRHRLLLET) the chain is on the cytoplasmic side. Residues 571-591 (LPELTFLLGLFGYLVFLVIYK) form a helical membrane-spanning segment. At 592 to 635 (WLCVWAARAASAPSILIHFINMFLFSHSPSNRLLYPRQEVVQAT) the chain is on the vacuolar side. The chain crosses the membrane as a helical span at residues 636–655 (LVVLALAMVPILLLGTPLHL). Over 656-720 (LHRHRRRLRR…EVLMHQAIHT (65 aa)) the chain is Cytoplasmic. Positions 681 to 701 (LPDASVNGWSSDEEKAGGLDD) are disordered. The chain crosses the membrane as a helical span at residues 721-745 (IEFCLGCVSNTASYLRLWALSLAHA). The Vacuolar portion of the chain corresponds to 746-766 (QLSEVLWAMVMRIGLGLGREV). Residues 767 to 807 (GVAAVVLVPIFAAFAVMTVAILLVMEGLSAFLHALRLHWVE) traverse the membrane as a helical segment. Over 808-830 (FQNKFYSGTGYKLSPFTFAATDD) the chain is Cytoplasmic.

It belongs to the V-ATPase 116 kDa subunit family. In terms of assembly, V-ATPase is a heteromultimeric enzyme made up of two complexes: the ATP-hydrolytic V1 complex and the proton translocation V0 complex. The V1 complex consists of three catalytic AB heterodimers that form a heterohexamer, three peripheral stalks each consisting of EG heterodimers, one central rotor including subunits D and F, and the regulatory subunits C and H. The proton translocation complex V0 consists of the proton transport subunit a, a ring of proteolipid subunits c9c'', rotary subunit d, subunits e and f, and the accessory subunits ATP6AP1/Ac45 and ATP6AP2/PRR. As to expression, isoform long is highly expressed in osteoclastomas. Isoform short is highly expressed in thymus.

It localises to the membrane. Functionally, subunit of the V0 complex of vacuolar(H+)-ATPase (V-ATPase), a multisubunit enzyme composed of a peripheral complex (V1) that hydrolyzes ATP and a membrane integral complex (V0) that translocates protons. V-ATPase is responsible for acidifying and maintaining the pH of intracellular compartments and in some cell types, is targeted to the plasma membrane, where it is responsible for acidifying the extracellular environment. Seems to be directly involved in T-cell activation. The chain is V-type proton ATPase 116 kDa subunit a 3 (TCIRG1) from Homo sapiens (Human).